Here is an 854-residue protein sequence, read N- to C-terminus: Iron and copper transporter IacT (854 aa).

The TonB box signature appears at 187-194; that stretch reads IELIVTAQ. One can recognise a TBDR plug domain in the interval 199–315; sequence DAQDVPLSLT…PAGVVNVISR (117 aa). The TBDR beta-barrel domain occupies 320 to 854; that stretch reads QPEMRISALY…TYGVRVSASF (535 aa). Positions 839 to 854 match the TonB C-terminal box motif; sequence GFGDPVTYGVRVSASF.

This sequence belongs to the TonB-dependent receptor family.

The protein localises to the cell outer membrane. Functionally, involved in the TonB-dependent uptake of copper and iron under conditions in which the concentration of copper exceeds that of the iron. This chain is Iron and copper transporter IacT, found in Nostoc sp. (strain PCC 7120 / SAG 25.82 / UTEX 2576).